The following is a 44-amino-acid chain: Photosystem I reaction center subunit IX (44 aa).

The chain crosses the membrane as a helical span at residues 7–27 (YLSVAPVLSTLWFGSLAGLLI).

It belongs to the PsaJ family.

It localises to the plastid. It is found in the chloroplast thylakoid membrane. In terms of biological role, may help in the organization of the PsaE and PsaF subunits. The sequence is that of Photosystem I reaction center subunit IX from Arabis hirsuta (Hairy rock-cress).